The chain runs to 212 residues: Octanoyltransferase (212 aa).

The BPL/LPL catalytic domain occupies 31 to 209; the sequence is AETQDEIWLV…HFADLLGYNI (179 aa). Substrate is bound by residues 70–77, 138–140, and 151–153; these read RGGQITYH, SLG, and GLA. Cysteine 169 (acyl-thioester intermediate) is an active-site residue.

Belongs to the LipB family.

The protein resides in the cytoplasm. The enzyme catalyses octanoyl-[ACP] + L-lysyl-[protein] = N(6)-octanoyl-L-lysyl-[protein] + holo-[ACP] + H(+). It functions in the pathway protein modification; protein lipoylation via endogenous pathway; protein N(6)-(lipoyl)lysine from octanoyl-[acyl-carrier-protein]: step 1/2. In terms of biological role, catalyzes the transfer of endogenously produced octanoic acid from octanoyl-acyl-carrier-protein onto the lipoyl domains of lipoate-dependent enzymes. Lipoyl-ACP can also act as a substrate although octanoyl-ACP is likely to be the physiological substrate. This is Octanoyltransferase from Haemophilus influenzae (strain PittGG).